The following is a 433-amino-acid chain: tRNA-2-methylthio-N(6)-dimethylallyladenosine synthase (433 aa).

Residues 3-118 (KKLFIQTLGC…ITKAVNTPKF (116 aa)) enclose the MTTase N-terminal domain. [4Fe-4S] cluster-binding residues include C12, C49, C81, C150, C154, and C157. The Radical SAM core domain maps to 136–369 (RGSPYKSHIN…QNRHSEILDE (234 aa)). The TRAM domain occupies 372–433 (AAQKDKIFDV…RMVLYGELQI (62 aa)).

The protein belongs to the methylthiotransferase family. MiaB subfamily. As to quaternary structure, monomer. It depends on [4Fe-4S] cluster as a cofactor.

The protein resides in the cytoplasm. It catalyses the reaction N(6)-dimethylallyladenosine(37) in tRNA + (sulfur carrier)-SH + AH2 + 2 S-adenosyl-L-methionine = 2-methylsulfanyl-N(6)-dimethylallyladenosine(37) in tRNA + (sulfur carrier)-H + 5'-deoxyadenosine + L-methionine + A + S-adenosyl-L-homocysteine + 2 H(+). Catalyzes the methylthiolation of N6-(dimethylallyl)adenosine (i(6)A), leading to the formation of 2-methylthio-N6-(dimethylallyl)adenosine (ms(2)i(6)A) at position 37 in tRNAs that read codons beginning with uridine. The sequence is that of tRNA-2-methylthio-N(6)-dimethylallyladenosine synthase from Campylobacter concisus (strain 13826).